A 92-amino-acid chain; its full sequence is Putative protein IntG (92 aa).

The protein belongs to the 'phage' integrase family.

The polypeptide is Putative protein IntG (intG) (Escherichia coli (strain K12)).